We begin with the raw amino-acid sequence, 400 residues long: Argininosuccinate synthase (400 aa).

8–16 provides a ligand contact to ATP; it reads AYSGGLDTS. Position 87 (Tyr87) interacts with L-citrulline. Residue Gly117 participates in ATP binding. Residues Thr119, Asn123, and Asp124 each coordinate L-aspartate. Asn123 lines the L-citrulline pocket. 4 residues coordinate L-citrulline: Arg127, Ser175, Glu260, and Tyr272.

It belongs to the argininosuccinate synthase family. Type 1 subfamily. Homotetramer.

Its subcellular location is the cytoplasm. It catalyses the reaction L-citrulline + L-aspartate + ATP = 2-(N(omega)-L-arginino)succinate + AMP + diphosphate + H(+). Its pathway is amino-acid biosynthesis; L-arginine biosynthesis; L-arginine from L-ornithine and carbamoyl phosphate: step 2/3. The protein is Argininosuccinate synthase of Mycolicibacterium vanbaalenii (strain DSM 7251 / JCM 13017 / BCRC 16820 / KCTC 9966 / NRRL B-24157 / PYR-1) (Mycobacterium vanbaalenii).